The chain runs to 61 residues: Large ribosomal subunit protein bL32 (61 aa).

Residues 1–19 (MAHPKRRQSKTRTAKRRTH) show a composition bias toward basic residues. The interval 1–20 (MAHPKRRQSKTRTAKRRTHD) is disordered.

The protein belongs to the bacterial ribosomal protein bL32 family.

The sequence is that of Large ribosomal subunit protein bL32 from Bacteroides fragilis (strain YCH46).